A 122-amino-acid polypeptide reads, in one-letter code: Large ribosomal subunit protein uL18 (122 aa).

It belongs to the universal ribosomal protein uL18 family. As to quaternary structure, part of the 50S ribosomal subunit; part of the 5S rRNA/L5/L18/L25 subcomplex. Contacts the 5S and 23S rRNAs.

This is one of the proteins that bind and probably mediate the attachment of the 5S RNA into the large ribosomal subunit, where it forms part of the central protuberance. This is Large ribosomal subunit protein uL18 from Geotalea uraniireducens (strain Rf4) (Geobacter uraniireducens).